Here is a 612-residue protein sequence, read N- to C-terminus: Dihydroxy-acid dehydratase (612 aa).

A Mg(2+)-binding site is contributed by Asp-81. Cys-122 contributes to the [2Fe-2S] cluster binding site. Mg(2+) contacts are provided by Asp-123 and Lys-124. At Lys-124 the chain carries N6-carboxylysine. [2Fe-2S] cluster is bound at residue Cys-196. Glu-492 lines the Mg(2+) pocket. The active-site Proton acceptor is the Ser-518.

It belongs to the IlvD/Edd family. As to quaternary structure, homodimer. [2Fe-2S] cluster is required as a cofactor. It depends on Mg(2+) as a cofactor.

It carries out the reaction (2R)-2,3-dihydroxy-3-methylbutanoate = 3-methyl-2-oxobutanoate + H2O. It catalyses the reaction (2R,3R)-2,3-dihydroxy-3-methylpentanoate = (S)-3-methyl-2-oxopentanoate + H2O. The protein operates within amino-acid biosynthesis; L-isoleucine biosynthesis; L-isoleucine from 2-oxobutanoate: step 3/4. It functions in the pathway amino-acid biosynthesis; L-valine biosynthesis; L-valine from pyruvate: step 3/4. Functionally, functions in the biosynthesis of branched-chain amino acids. Catalyzes the dehydration of (2R,3R)-2,3-dihydroxy-3-methylpentanoate (2,3-dihydroxy-3-methylvalerate) into 2-oxo-3-methylpentanoate (2-oxo-3-methylvalerate) and of (2R)-2,3-dihydroxy-3-methylbutanoate (2,3-dihydroxyisovalerate) into 2-oxo-3-methylbutanoate (2-oxoisovalerate), the penultimate precursor to L-isoleucine and L-valine, respectively. This Paracoccus denitrificans (strain Pd 1222) protein is Dihydroxy-acid dehydratase.